The sequence spans 502 residues: MKFFIKNVLLEEEKSDCIVIGVFEFCEFKYSNNYLNKSICSYINNFIKKGDMQGKVGETLLLYDVPNVVSKRILLVGCGKKNRLNRYYLDKIINKSMKILNKFSIKNIIFSLTEINIENYDIYWSIRTIVNSINKYLYKNFKINAFLKKEVYLNSISFHIIEKKDFHIANNSLKHALAINSGITAAKNLADLPPNICNPLYLSLQAQKLSEKYKDKIHVTSIDIKEMNNLGMNAYVAVGKGSKNKPYMSVIKYSGINNTEQEKIIVLIGKGLTFDSGGISIKPSNNMNEMKYDMCGAAAVYGTLIAAAKLNLPLTIIGILAGCENMPGGNAFRPGDIITTMSGKTVEILNTDAEGRLVLCDVLTYVQRFSPNIVIDIATLTGACVVALGNHFSGLFSNDDQLAYALEKSSRQTNDKIWRLPLSLEYEKELHSNFADLSNVGRGKAGAITASCFLAQFSKKYTWAHLDIAGTAWKSGKNHGATGRPVELLSQFLLNESNFLKF.

Residues Lys270 and Asp275 each coordinate Mn(2+). Lys282 is an active-site residue. Mn(2+) is bound by residues Asp293, Asp352, and Glu354. Residue Arg356 is part of the active site.

The protein belongs to the peptidase M17 family. Requires Mn(2+) as cofactor.

Its subcellular location is the cytoplasm. The enzyme catalyses Release of an N-terminal amino acid, Xaa-|-Yaa-, in which Xaa is preferably Leu, but may be other amino acids including Pro although not Arg or Lys, and Yaa may be Pro. Amino acid amides and methyl esters are also readily hydrolyzed, but rates on arylamides are exceedingly low.. It catalyses the reaction Release of an N-terminal amino acid, preferentially leucine, but not glutamic or aspartic acids.. In terms of biological role, presumably involved in the processing and regular turnover of intracellular proteins. Catalyzes the removal of unsubstituted N-terminal amino acids from various peptides. In Buchnera aphidicola subsp. Schizaphis graminum (strain Sg), this protein is Probable cytosol aminopeptidase.